A 673-amino-acid polypeptide reads, in one-letter code: UvrABC system protein B (673 aa).

The region spanning 26–414 (EGLEDGLAHQ…GGDVVDQVVR (389 aa)) is the Helicase ATP-binding domain. ATP is bound at residue 39–46 (GVTGSGKT). A Beta-hairpin motif is present at residues 92–115 (YYDYYQPEAYVPSSDTFIEKDASV). In terms of domain architecture, Helicase C-terminal spans 431–597 (QVDDLLSEIR…GLNKKVVDIL (167 aa)). The region spanning 633-668 (QQKIHELEGLMMQHAQNLEFEEAAQIRDQLHQLREL) is the UVR domain.

This sequence belongs to the UvrB family. In terms of assembly, forms a heterotetramer with UvrA during the search for lesions. Interacts with UvrC in an incision complex.

The protein resides in the cytoplasm. Its function is as follows. The UvrABC repair system catalyzes the recognition and processing of DNA lesions. A damage recognition complex composed of 2 UvrA and 2 UvrB subunits scans DNA for abnormalities. Upon binding of the UvrA(2)B(2) complex to a putative damaged site, the DNA wraps around one UvrB monomer. DNA wrap is dependent on ATP binding by UvrB and probably causes local melting of the DNA helix, facilitating insertion of UvrB beta-hairpin between the DNA strands. Then UvrB probes one DNA strand for the presence of a lesion. If a lesion is found the UvrA subunits dissociate and the UvrB-DNA preincision complex is formed. This complex is subsequently bound by UvrC and the second UvrB is released. If no lesion is found, the DNA wraps around the other UvrB subunit that will check the other stand for damage. This chain is UvrABC system protein B, found in Shigella flexneri.